Here is a 106-residue protein sequence, read N- to C-terminus: Phosphoribosyl-ATP pyrophosphatase 1 (106 aa).

It belongs to the PRA-PH family.

Its subcellular location is the cytoplasm. The enzyme catalyses 1-(5-phospho-beta-D-ribosyl)-ATP + H2O = 1-(5-phospho-beta-D-ribosyl)-5'-AMP + diphosphate + H(+). It functions in the pathway amino-acid biosynthesis; L-histidine biosynthesis; L-histidine from 5-phospho-alpha-D-ribose 1-diphosphate: step 2/9. The chain is Phosphoribosyl-ATP pyrophosphatase 1 (hisE1) from Bradyrhizobium diazoefficiens (strain JCM 10833 / BCRC 13528 / IAM 13628 / NBRC 14792 / USDA 110).